Reading from the N-terminus, the 989-residue chain is Phosphoenolpyruvate carboxylase (989 aa).

Active-site residues include histidine 175 and lysine 630.

The protein belongs to the PEPCase type 1 family. Mg(2+) is required as a cofactor.

It catalyses the reaction oxaloacetate + phosphate = phosphoenolpyruvate + hydrogencarbonate. In terms of biological role, forms oxaloacetate, a four-carbon dicarboxylic acid source for the tricarboxylic acid cycle. In Prochlorococcus marinus (strain MIT 9515), this protein is Phosphoenolpyruvate carboxylase.